Here is a 137-residue protein sequence, read N- to C-terminus: Cellular retinoic acid-binding protein 1 (137 aa).

The Nuclear localization signal signature appears at 21 to 31 (KALGVNAMLRK). All-trans-retinoate is bound at residue 132–134 (RIY).

This sequence belongs to the calycin superfamily. Fatty-acid binding protein (FABP) family.

It is found in the cytoplasm. Cytosolic CRABPs may regulate the access of retinoic acid to the nuclear retinoic acid receptors. This is Cellular retinoic acid-binding protein 1 (CRABP1) from Homo sapiens (Human).